We begin with the raw amino-acid sequence, 633 residues long: Proline-rich receptor-like protein kinase PERK4 (633 aa).

Low complexity predominate over residues 1 to 29; that stretch reads MASSPESAPPTNSTSSPSPPSNTNSTTSS. The segment at 1 to 145 is disordered; it reads MASSPESAPP…GSSGGGGGGR (145 aa). At 1–151 the chain is on the extracellular side; the sequence is MASSPESAPP…GGGRSNTNTA (151 aa). Residues asparagine 12 and asparagine 24 are each glycosylated (N-linked (GlcNAc...) asparagine). Composition is skewed to pro residues over residues 30-41 and 48-65; these read PPAPSPPSPTPP and SPPPDSTSPPAPQAPNPP. A glycan (N-linked (GlcNAc...) asparagine) is linked at asparagine 66. Gly residues predominate over residues 77 to 90; it reads QGGGGERGNGGNNG. Residues 106 to 135 show a composition bias toward low complexity; that stretch reads SRSNGDNGGSRSSPPGDTGGSRSDNPPSSG. Residues 136-145 are compositionally biased toward gly residues; sequence GSSGGGGGGR. Residues 152–172 form a helical membrane-spanning segment; the sequence is IIVGVLVGAGLLMIVLIIVCL. The Cytoplasmic portion of the chain corresponds to 173–633; sequence RRKKKRKDSF…MGTKSPTPPK (461 aa). Low complexity predominate over residues 193 to 222; that stretch reads QYYGNNNNNNASQNYPNWHLNSQGQNQQST. A disordered region spans residues 193–255; the sequence is QYYGNNNNNN…SMYSGPSRPV (63 aa). Threonine 273 carries the phosphothreonine modification. Residues 284 to 562 enclose the Protein kinase domain; it reads FTDANLLGQG…VRALEGEVSL (279 aa). ATP-binding positions include 290 to 298 and lysine 312; that span reads LGQGGFGYV. At tyrosine 357 the chain carries Phosphotyrosine. Aspartate 408 functions as the Proton acceptor in the catalytic mechanism. Residue serine 441 is modified to Phosphoserine. Residues threonine 442 and threonine 447 each carry the phosphothreonine modification. Tyrosine 455 carries the phosphotyrosine modification. A compositionally biased stretch (polar residues) spans 608–619; the sequence is FPVSDCEGTSSN. The disordered stretch occupies residues 608–633; it reads FPVSDCEGTSSNDSRDMGTKSPTPPK.

This sequence belongs to the protein kinase superfamily. Ser/Thr protein kinase family. In terms of tissue distribution, mostly expressed in inflorescence bolts. Also present in roots, stems, germinated seeds, cotyledons, pollen, stamen and stigma.

The protein resides in the cell membrane. It carries out the reaction L-seryl-[protein] + ATP = O-phospho-L-seryl-[protein] + ADP + H(+). The catalysed reaction is L-threonyl-[protein] + ATP = O-phospho-L-threonyl-[protein] + ADP + H(+). With respect to regulation, activated by ABA and Ca(2+). Functionally, required during abscisic acid (ABA)-mediated activation of Ca(2+) channels. Regulates ABA signaling pathways. Modulates the expression of genes related to cell elongation and ABA signaling during root growth. This chain is Proline-rich receptor-like protein kinase PERK4 (PERK4), found in Arabidopsis thaliana (Mouse-ear cress).